The chain runs to 484 residues: Glycogen synthase (484 aa).

Residue Lys-15 participates in ADP-alpha-D-glucose binding.

The protein belongs to the glycosyltransferase 1 family. Bacterial/plant glycogen synthase subfamily.

It catalyses the reaction [(1-&gt;4)-alpha-D-glucosyl](n) + ADP-alpha-D-glucose = [(1-&gt;4)-alpha-D-glucosyl](n+1) + ADP + H(+). Its pathway is glycan biosynthesis; glycogen biosynthesis. Synthesizes alpha-1,4-glucan chains using ADP-glucose. The polypeptide is Glycogen synthase (Syntrophotalea carbinolica (strain DSM 2380 / NBRC 103641 / GraBd1) (Pelobacter carbinolicus)).